Here is a 345-residue protein sequence, read N- to C-terminus: NADH-ubiquinone oxidoreductase chain 2 (345 aa).

A run of 10 helical transmembrane segments spans residues 1-21 (MNPI…ILTM), 25-45 (HWVS…PIIS), 59-79 (YFLI…TNAY), 96-116 (IMLS…FWLP), 123-143 (PMIT…ALLI), 148-168 (LIPP…GGLG), 191-211 (ITIT…YILL), 240-260 (TASL…LSGF), 274-294 (HLTP…MFYL), and 324-344 (SLLS…PLMI).

This sequence belongs to the complex I subunit 2 family.

Its subcellular location is the mitochondrion inner membrane. It carries out the reaction a ubiquinone + NADH + 5 H(+)(in) = a ubiquinol + NAD(+) + 4 H(+)(out). Functionally, core subunit of the mitochondrial membrane respiratory chain NADH dehydrogenase (Complex I) that is believed to belong to the minimal assembly required for catalysis. Complex I functions in the transfer of electrons from NADH to the respiratory chain. The immediate electron acceptor for the enzyme is believed to be ubiquinone. In Varanus timorensis (Timor monitor), this protein is NADH-ubiquinone oxidoreductase chain 2 (MT-ND2).